An 815-amino-acid polypeptide reads, in one-letter code: Ferripyoverdine receptor (815 aa).

Residues 1–43 form the signal peptide; the sequence is MPAPHGLSPLSKAFLMRRAFQRRILPHSLAMALSLPLAGYVQA. Residues 161 to 271 enclose the TBDR plug domain; it reads TPRETPQSIT…LGATINLIRK (111 aa). In terms of domain architecture, TBDR beta-barrel spans 276-815; the sequence is EFKGHVELGA…NLMFSTRWDF (540 aa). The TonB C-terminal box signature appears at 798–815; it reads SASYGDPRNLMFSTRWDF.

It belongs to the TonB-dependent receptor family.

Its subcellular location is the cell outer membrane. Receptor for the siderophore ferripyoverdine. The protein is Ferripyoverdine receptor (fpvA) of Pseudomonas aeruginosa (strain ATCC 15692 / DSM 22644 / CIP 104116 / JCM 14847 / LMG 12228 / 1C / PRS 101 / PAO1).